Here is a 104-residue protein sequence, read N- to C-terminus: UPF0145 protein DET1617 (104 aa).

This sequence belongs to the UPF0145 family.

The polypeptide is UPF0145 protein DET1617 (Dehalococcoides mccartyi (strain ATCC BAA-2266 / KCTC 15142 / 195) (Dehalococcoides ethenogenes (strain 195))).